We begin with the raw amino-acid sequence, 57 residues long: Large ribosomal subunit protein bL32 (57 aa).

This sequence belongs to the bacterial ribosomal protein bL32 family.

This Staphylococcus aureus (strain MSSA476) protein is Large ribosomal subunit protein bL32.